A 247-amino-acid polypeptide reads, in one-letter code: Triosephosphate isomerase (247 aa).

10-12 serves as a coordination point for substrate; it reads NWK. H92 serves as the catalytic Electrophile. E164 acts as the Proton acceptor in catalysis. Residues G170, S209, and 230-231 contribute to the substrate site; that span reads GG.

The protein belongs to the triosephosphate isomerase family. Homodimer.

It localises to the cytoplasm. The enzyme catalyses D-glyceraldehyde 3-phosphate = dihydroxyacetone phosphate. Its pathway is carbohydrate biosynthesis; gluconeogenesis. It participates in carbohydrate degradation; glycolysis; D-glyceraldehyde 3-phosphate from glycerone phosphate: step 1/1. In terms of biological role, involved in the gluconeogenesis. Catalyzes stereospecifically the conversion of dihydroxyacetone phosphate (DHAP) to D-glyceraldehyde-3-phosphate (G3P). This is Triosephosphate isomerase from Alcanivorax borkumensis (strain ATCC 700651 / DSM 11573 / NCIMB 13689 / SK2).